Here is a 351-residue protein sequence, read N- to C-terminus: ADP-glucose phosphorylase (351 aa).

A disordered region spans residues 1-63 (MTSPSHASDR…QNPNPKPSSC (63 aa)). 41-44 (RAKR) lines the ADP-alpha-D-glucose pocket. Residues cysteine 63 and cysteine 66 each contribute to the Zn(2+) site. ADP-alpha-D-glucose is bound by residues 72–74 (ECA) and asparagine 94. Histidine 133 serves as a coordination point for Zn(2+). ADP-alpha-D-glucose is bound by residues asparagine 173 and 179-182 (GASM). Zn(2+) is bound at residue histidine 184. Histidine 186 acts as the Tele-AMP-histidine intermediate in catalysis. ADP-alpha-D-glucose is bound at residue glutamine 188. Zn(2+) is bound by residues cysteine 216, cysteine 219, histidine 255, and histidine 310. ADP-alpha-D-glucose is bound by residues glycine 321 and 325-326 (FE).

This sequence belongs to the galactose-1-phosphate uridylyltransferase type 1 family. In terms of assembly, homodimer. Requires Zn(2+) as cofactor.

The enzyme catalyses alpha-D-glucose 1-phosphate + ADP + H(+) = ADP-alpha-D-glucose + phosphate. Functionally, catalyzes the conversion of ADP-glucose and inorganic phosphate (Pi) into glucose-1-phosphate and ADP. Does not possess galactose-1-phosphate uridylyltransferase activity. In Arabidopsis thaliana (Mouse-ear cress), this protein is ADP-glucose phosphorylase.